The primary structure comprises 58 residues: Small ribosomal subunit protein bS21 (58 aa).

A disordered region spans residues 36–58 (EFYEKPSVKRKRKSEAARKRKKF). The span at 43–58 (VKRKRKSEAARKRKKF) shows a compositional bias: basic residues.

It belongs to the bacterial ribosomal protein bS21 family.

The sequence is that of Small ribosomal subunit protein bS21 from Streptococcus uberis (strain ATCC BAA-854 / 0140J).